The following is a 246-amino-acid chain: uncharacterized protein (246 aa).

The stretch at 204 to 243 (TTKLKKLEKEIHELPYMLINGKITYEEYKKRIREIEKEIG) forms a coiled coil.

This is an uncharacterized protein from Aquifex aeolicus (strain VF5).